Consider the following 92-residue polypeptide: DNA-directed RNA polymerase subunit Rpo11 (92 aa).

The protein belongs to the archaeal Rpo11/eukaryotic RPB11/RPC19 RNA polymerase subunit family. Part of the RNA polymerase complex.

It is found in the cytoplasm. The catalysed reaction is RNA(n) + a ribonucleoside 5'-triphosphate = RNA(n+1) + diphosphate. Functionally, DNA-dependent RNA polymerase (RNAP) catalyzes the transcription of DNA into RNA using the four ribonucleoside triphosphates as substrates. The polypeptide is DNA-directed RNA polymerase subunit Rpo11 (Pyrobaculum aerophilum (strain ATCC 51768 / DSM 7523 / JCM 9630 / CIP 104966 / NBRC 100827 / IM2)).